The following is a 1028-amino-acid chain: Unconventional myosin-Ic (1028 aa).

Methionine 1 carries the post-translational modification N-acetylmethionine. One can recognise a Myosin motor domain in the interval 12–696 (GVQDFVLLEN…TLFATEDALE (685 aa)). Residues asparagine 53, tyrosine 61, 104–113 (SGESGAGKTE), and 157–161 (NDNSS) each bind ATP. Position 348 is an N6-methyllysine (lysine 348). The interval 573–595 (LSKLMEILMSKEPSYIRCIKPND) is actin-binding. 2 IQ domains span residues 699 to 728 (KQSLATKMQATWRGFYRRKKFLHMKHSAIA) and 722 to 751 (MKHSAIAIQSWWRGTLGRRKAAKRKWAVQT). Residues 850–1024 (KDNYPQSVPR…NGHLTVVAPR (175 aa)) form the TH1 domain.

Belongs to the TRAFAC class myosin-kinesin ATPase superfamily. Myosin family. In terms of assembly, interacts (via its IQ motifs) with CALM.

The protein localises to the cytoplasm. Its subcellular location is the cell cortex. It localises to the cell projection. The protein resides in the ruffle membrane. It is found in the cytoplasmic vesicle. The protein localises to the stereocilium membrane. Its function is as follows. Myosins are actin-based motor molecules with ATPase activity. Unconventional myosins serve in intracellular movements. Their highly divergent tails are presumed to bind to membranous compartments, which would be moved relative to actin filaments. This chain is Unconventional myosin-Ic (MYO1C), found in Gallus gallus (Chicken).